Consider the following 212-residue polypeptide: Golgi SNAP receptor complex member 2 homolog memb-1 (212 aa).

At 1-189 the chain is on the cytoplasmic side; sequence MEAQYQSTNF…QVIDRRVRED (189 aa). A helical; Anchor for type IV membrane protein membrane pass occupies residues 190 to 210; it reads WIFVIGCIVCCIFMYAFYRFW. Topologically, residues 211–212 are vesicular; that stretch reads RG.

It belongs to the GOSR2 family. In terms of assembly, part of a unique SNARE complex.

It localises to the golgi apparatus. It is found in the cis-Golgi network membrane. Its subcellular location is the golgi apparatus membrane. The protein resides in the endoplasmic reticulum membrane. Functionally, involved in transport of proteins from the cis/medial-Golgi to the trans-Golgi network. The chain is Golgi SNAP receptor complex member 2 homolog memb-1 from Caenorhabditis briggsae.